The sequence spans 290 residues: 33 kDa chaperonin (290 aa).

2 cysteine pairs are disulfide-bonded: Cys235/Cys237 and Cys268/Cys271.

This sequence belongs to the HSP33 family. In terms of processing, under oxidizing conditions two disulfide bonds are formed involving the reactive cysteines. Under reducing conditions zinc is bound to the reactive cysteines and the protein is inactive.

It is found in the cytoplasm. Redox regulated molecular chaperone. Protects both thermally unfolding and oxidatively damaged proteins from irreversible aggregation. Plays an important role in the bacterial defense system toward oxidative stress. The chain is 33 kDa chaperonin from Streptococcus pyogenes serotype M28 (strain MGAS6180).